A 396-amino-acid chain; its full sequence is 1-deoxy-D-xylulose 5-phosphate reductoisomerase (396 aa).

NADPH is bound by residues threonine 15, glycine 16, isoleucine 18, and asparagine 127. Lysine 128 provides a ligand contact to 1-deoxy-D-xylulose 5-phosphate. Position 129 (glutamate 129) interacts with NADPH. Aspartate 153 contributes to the Mn(2+) binding site. Residues serine 154, glutamate 155, serine 177, and histidine 200 each coordinate 1-deoxy-D-xylulose 5-phosphate. Glutamate 155 provides a ligand contact to Mn(2+). NADPH is bound at residue glycine 206. Residues serine 213, asparagine 218, lysine 219, and glutamate 222 each coordinate 1-deoxy-D-xylulose 5-phosphate. Glutamate 222 provides a ligand contact to Mn(2+).

This sequence belongs to the DXR family. It depends on Mg(2+) as a cofactor. Requires Mn(2+) as cofactor.

It catalyses the reaction 2-C-methyl-D-erythritol 4-phosphate + NADP(+) = 1-deoxy-D-xylulose 5-phosphate + NADPH + H(+). The protein operates within isoprenoid biosynthesis; isopentenyl diphosphate biosynthesis via DXP pathway; isopentenyl diphosphate from 1-deoxy-D-xylulose 5-phosphate: step 1/6. Functionally, catalyzes the NADPH-dependent rearrangement and reduction of 1-deoxy-D-xylulose-5-phosphate (DXP) to 2-C-methyl-D-erythritol 4-phosphate (MEP). The protein is 1-deoxy-D-xylulose 5-phosphate reductoisomerase of Anaplasma marginale (strain Florida).